The sequence spans 744 residues: Adenosylcobalamin-dependent ribonucleoside-triphosphate reductase (744 aa).

Cysteine 120 and cysteine 424 are joined by a disulfide. Residues 148 to 159 are effector region-1; the sequence is SMPFSFLFDQLM. The tract at residues 169–318 is effector region-2; that stretch reads VDDNINQIPQ…ICNLIGKTVV (150 aa). Active-site residues include cysteine 413 and glutamate 415. The segment at 570–631 is adenosylcobalamin-binding-1; that stretch reads FHYAGYLIQR…SKNFASAGTV (62 aa). Residues 690-729 are adenosylcobalamin-binding-2; that stretch reads LKQAPKEPINKKAYEDRVAMITGDVKEVFENQNKDQKGLE.

Belongs to the class II ribonucleoside-triphosphate reductase family. As to quaternary structure, monomer. Requires adenosylcob(III)alamin as cofactor.

The catalysed reaction is a 2'-deoxyribonucleoside 5'-triphosphate + [thioredoxin]-disulfide + H2O = a ribonucleoside 5'-triphosphate + [thioredoxin]-dithiol. With respect to regulation, allosterically regulated by ATP and dNTP. The chain is Adenosylcobalamin-dependent ribonucleoside-triphosphate reductase (rtpR) from Lactobacillus helveticus (strain DPC 4571).